The chain runs to 365 residues: Leu/Ile/Val/Thr-binding protein (365 aa).

Positions Met1–Ala21 are cleaved as a signal peptide. An intrachain disulfide couples Cys74 to Cys99.

This sequence belongs to the leucine-binding protein family.

The protein localises to the periplasm. This protein is a component of the leucine, isoleucine, valine, threonine transport system, which is one of the two periplasmic binding protein-dependent transport systems of the high-affinity transport of the branched-chain amino acids. The chain is Leu/Ile/Val/Thr-binding protein (livJ) from Salmonella typhimurium (strain LT2 / SGSC1412 / ATCC 700720).